The sequence spans 71 residues: uncharacterized protein (71 aa).

This is an uncharacterized protein from Spiroplasma virus 4 (SpV4).